An 858-amino-acid chain; its full sequence is Bifunctional uridylyltransferase/uridylyl-removing enzyme (858 aa).

Positions 1-318 (MNPTDLHPIK…FPRPESDARA (318 aa)) are uridylyltransferase. Positions 319–674 (IDEEFRSLHG…VRPTEEGSGL (356 aa)) are uridylyl-removing. The region spanning 437–559 (VDQHTLAVIR…VKDERHLNAL (123 aa)) is the HD domain. ACT domains are found at residues 675-756 (QIMV…LADV) and 789-858 (RLSV…LAGE).

The protein belongs to the GlnD family. Requires Mg(2+) as cofactor.

The enzyme catalyses [protein-PII]-L-tyrosine + UTP = [protein-PII]-uridylyl-L-tyrosine + diphosphate. The catalysed reaction is [protein-PII]-uridylyl-L-tyrosine + H2O = [protein-PII]-L-tyrosine + UMP + H(+). With respect to regulation, uridylyltransferase (UTase) activity is inhibited by glutamine, while glutamine activates uridylyl-removing (UR) activity. Its function is as follows. Modifies, by uridylylation and deuridylylation, the PII regulatory proteins (GlnB and homologs), in response to the nitrogen status of the cell that GlnD senses through the glutamine level. Under low glutamine levels, catalyzes the conversion of the PII proteins and UTP to PII-UMP and PPi, while under higher glutamine levels, GlnD hydrolyzes PII-UMP to PII and UMP (deuridylylation). Thus, controls uridylylation state and activity of the PII proteins, and plays an important role in the regulation of nitrogen assimilation and metabolism. The chain is Bifunctional uridylyltransferase/uridylyl-removing enzyme from Bordetella avium (strain 197N).